The primary structure comprises 190 residues: Dynein axonemal light chain 1 (190 aa).

A2 carries the post-translational modification N-acetylalanine. 4 LRR repeats span residues 49–70, 71–92, 94–115, and 116–137; these read NCEK…NGLK, NLRI…EAVG, TLEE…HVMK, and KLKI…LKLA. S56 is subject to Phosphoserine. One can recognise an LRRCT domain in the interval 150–190; it reads NPLEEKHSAEGNWIDEATKRVPKLKKLDGTPVIKEDEEEES.

The protein belongs to the dynein light chain LC1-type family. In terms of assembly, interacts with ZMYND10 (via C-terminus). Interacts with DNAH5, a outer arm dynein heavy chain. Interacts with tubulin located within the A-tubule of the outer doublets in a ATP-independent manner. In terms of tissue distribution, expressed in the respiratory epithelium of the upper airways and the ependymal cells lining the brain ventricles.

Its subcellular location is the cytoplasm. It is found in the cytoskeleton. The protein resides in the cilium axoneme. In terms of biological role, part of the multisubunit axonemal ATPase complexes that generate the force for cilia motility and govern beat frequency. Component of the outer arm dynein (ODA). May be involved in a mechanosensory feedback mechanism controlling ODA activity based on external conformational cues by tethering the outer arm dynein heavy chain (DNAH5) to the microtubule within the axoneme. Important for ciliary function in the airways and for the function of the cilia that produce the nodal flow essential for the determination of the left-right asymmetry. The sequence is that of Dynein axonemal light chain 1 (Dnal1) from Mus musculus (Mouse).